The following is a 129-amino-acid chain: MIGTSSLYQLLKITFFFYPYATVLKVGKVGVVVRIVDGAFGPVSLLFWLLGWKIPSKRVPSSNSCGLDTKSPAKNGAMSIKRSTPSITKYREKYFETILLLNALCFRVKILLCAIILLGFIQNSTIVCQ.

The next 2 membrane-spanning stretches (helical) occupy residues 35-55 (IVDGAFGPVSLLFWLLGWKIP) and 98-118 (ILLLNALCFRVKILLCAIILL).

The protein resides in the membrane. This is an uncharacterized protein from Saccharomyces cerevisiae (strain ATCC 204508 / S288c) (Baker's yeast).